We begin with the raw amino-acid sequence, 214 residues long: Corrinoid adenosyltransferase (214 aa).

Residue 50–56 (GKGKGKS) participates in ATP binding.

This sequence belongs to the Cob(I)alamin adenosyltransferase family. Monomer. Requires Mn(2+) as cofactor.

It is found in the cytoplasm. The catalysed reaction is 2 cob(II)yrinate a,c diamide + reduced [electron-transfer flavoprotein] + 2 ATP = 2 adenosylcob(III)yrinate a,c-diamide + 2 triphosphate + oxidized [electron-transfer flavoprotein] + 3 H(+). It carries out the reaction 2 cob(II)alamin + reduced [electron-transfer flavoprotein] + 2 ATP = 2 adenosylcob(III)alamin + 2 triphosphate + oxidized [electron-transfer flavoprotein] + 3 H(+). It participates in cofactor biosynthesis; adenosylcobalamin biosynthesis; adenosylcobalamin from cob(II)yrinate a,c-diamide: step 2/7. Functionally, required for both de novo synthesis of the corrin ring for the assimilation of exogenous corrinoids. Participates in the adenosylation of a variety of incomplete and complete corrinoids. This is Corrinoid adenosyltransferase (cobO) from Sinorhizobium sp.